The chain runs to 216 residues: Cytochrome c oxidase assembly protein CtaG (216 aa).

Low complexity predominate over residues 1 to 23 (MTDAPQHPQQPATGTPATPKAAP). The segment at 1–24 (MTDAPQHPQQPATGTPATPKAAPR) is disordered. Topologically, residues 1 to 26 (MTDAPQHPQQPATGTPATPKAAPRVG) are cytoplasmic. A helical; Signal-anchor for type II membrane protein transmembrane segment spans residues 27 to 49 (RDVRIGATCGLLVALMVGAAYAA). The Periplasmic portion of the chain corresponds to 50 to 216 (VPFYNWFCRA…SEPDRPGGSI (167 aa)).

Belongs to the COX11/CtaG family.

It localises to the cell inner membrane. Functionally, exerts its effect at some terminal stage of cytochrome c oxidase synthesis, probably by being involved in the insertion of the copper B into subunit I. The sequence is that of Cytochrome c oxidase assembly protein CtaG from Nitrobacter hamburgensis (strain DSM 10229 / NCIMB 13809 / X14).